Reading from the N-terminus, the 287-residue chain is Cbb3-type cytochrome c oxidase subunit FixP (287 aa).

Over 1 to 33 (MSQKHIDELSGVETTGHEWDGIQELNNPMPRWW) the chain is Cytoplasmic. The chain crosses the membrane as a helical span at residues 34–54 (IWTFYVTILWAIGYAIAYPAI). The Periplasmic segment spans residues 55 to 287 (PMITSATNGY…IFVHALGGGT (233 aa)). 2 consecutive Cytochrome c domains span residues 108 to 196 (FAIA…WGLT) and 203 to 284 (GLAA…HALG). The heme c site is built by Cys-121, Cys-124, His-125, Met-173, Cys-216, Cys-219, His-220, and Met-261.

It belongs to the CcoP / FixP family. As to quaternary structure, component of the cbb3-type cytochrome c oxidase at least composed of FixN, FixO, FixQ and FixP. Heme c serves as cofactor.

It localises to the cell inner membrane. It functions in the pathway energy metabolism; oxidative phosphorylation. In terms of biological role, C-type cytochrome. Part of the cbb3-type cytochrome c oxidase complex. FixP subunit is required for transferring electrons from donor cytochrome c via its heme groups to FixO subunit. From there, electrons are shuttled to the catalytic binuclear center of FixN subunit where oxygen reduction takes place. The complex also functions as a proton pump. The sequence is that of Cbb3-type cytochrome c oxidase subunit FixP from Rhizobium etli (strain ATCC 51251 / DSM 11541 / JCM 21823 / NBRC 15573 / CFN 42).